We begin with the raw amino-acid sequence, 801 residues long: Phenylalanine--tRNA ligase beta subunit (801 aa).

The 116-residue stretch at 39–154 folds into the tRNA-binding domain; that stretch reads LKMPQKVVVG…GHLELGVELG (116 aa). Residues 398–475 enclose the B5 domain; that stretch reads IDEITIKTTF…RIYGIDNVSS (78 aa). Positions 453, 459, 462, and 463 each coordinate Mg(2+). Residues 708-800 enclose the FDX-ACB domain; that stretch reads SKYQKSTRDL…LVREFDAVLR (93 aa).

This sequence belongs to the phenylalanyl-tRNA synthetase beta subunit family. Type 1 subfamily. In terms of assembly, tetramer of two alpha and two beta subunits. Mg(2+) serves as cofactor.

It localises to the cytoplasm. The enzyme catalyses tRNA(Phe) + L-phenylalanine + ATP = L-phenylalanyl-tRNA(Phe) + AMP + diphosphate + H(+). The polypeptide is Phenylalanine--tRNA ligase beta subunit (Helicobacter hepaticus (strain ATCC 51449 / 3B1)).